Reading from the N-terminus, the 273-residue chain is Ribosomal RNA small subunit methyltransferase A (273 aa).

S-adenosyl-L-methionine is bound by residues asparagine 18, leucine 20, glycine 45, glutamate 66, aspartate 91, and asparagine 113.

The protein belongs to the class I-like SAM-binding methyltransferase superfamily. rRNA adenine N(6)-methyltransferase family. RsmA subfamily.

Its subcellular location is the cytoplasm. The enzyme catalyses adenosine(1518)/adenosine(1519) in 16S rRNA + 4 S-adenosyl-L-methionine = N(6)-dimethyladenosine(1518)/N(6)-dimethyladenosine(1519) in 16S rRNA + 4 S-adenosyl-L-homocysteine + 4 H(+). Its function is as follows. Specifically dimethylates two adjacent adenosines (A1518 and A1519) in the loop of a conserved hairpin near the 3'-end of 16S rRNA in the 30S particle. May play a critical role in biogenesis of 30S subunits. The sequence is that of Ribosomal RNA small subunit methyltransferase A from Klebsiella pneumoniae subsp. pneumoniae (strain ATCC 700721 / MGH 78578).